A 291-amino-acid polypeptide reads, in one-letter code: Porphobilinogen deaminase (291 aa).

Residue Cys238 is modified to S-(dipyrrolylmethanemethyl)cysteine.

Belongs to the HMBS family. As to quaternary structure, monomer. Dipyrromethane is required as a cofactor.

It carries out the reaction 4 porphobilinogen + H2O = hydroxymethylbilane + 4 NH4(+). It participates in porphyrin-containing compound metabolism; protoporphyrin-IX biosynthesis; coproporphyrinogen-III from 5-aminolevulinate: step 2/4. Tetrapolymerization of the monopyrrole PBG into the hydroxymethylbilane pre-uroporphyrinogen in several discrete steps. This Clostridium beijerinckii (strain ATCC 51743 / NCIMB 8052) (Clostridium acetobutylicum) protein is Porphobilinogen deaminase.